Consider the following 296-residue polypeptide: Putative methyltransferase HI_1523 (296 aa).

This sequence belongs to the N(4)/N(6)-methyltransferase family.

This Haemophilus influenzae (strain ATCC 51907 / DSM 11121 / KW20 / Rd) protein is Putative methyltransferase HI_1523.